The chain runs to 124 residues: MPTIQQLIRTERQRLTRKTKSPALRSCPERRGVCTRVYTSTPKKPNSALRKVARVRLTSGFEVTAYIPGIGHNLQEHSVVLLRGGRVKDLPGVRYHIIRGTLDTAGVKDRRQARSKYGAKAPKS.

Aspartate 89 carries the 3-methylthioaspartic acid modification.

It belongs to the universal ribosomal protein uS12 family. As to quaternary structure, part of the 30S ribosomal subunit. Contacts proteins S8 and S17. May interact with IF1 in the 30S initiation complex.

With S4 and S5 plays an important role in translational accuracy. Functionally, interacts with and stabilizes bases of the 16S rRNA that are involved in tRNA selection in the A site and with the mRNA backbone. Located at the interface of the 30S and 50S subunits, it traverses the body of the 30S subunit contacting proteins on the other side and probably holding the rRNA structure together. The combined cluster of proteins S8, S12 and S17 appears to hold together the shoulder and platform of the 30S subunit. This is Small ribosomal subunit protein uS12 from Prochlorococcus marinus (strain SARG / CCMP1375 / SS120).